Here is a 464-residue protein sequence, read N- to C-terminus: ATP synthase subunit beta (464 aa).

Residue 152-159 participates in ATP binding; the sequence is GGAGVGKT.

The protein belongs to the ATPase alpha/beta chains family. As to quaternary structure, F-type ATPases have 2 components, CF(1) - the catalytic core - and CF(0) - the membrane proton channel. CF(1) has five subunits: alpha(3), beta(3), gamma(1), delta(1), epsilon(1). CF(0) has three main subunits: a(1), b(2) and c(9-12). The alpha and beta chains form an alternating ring which encloses part of the gamma chain. CF(1) is attached to CF(0) by a central stalk formed by the gamma and epsilon chains, while a peripheral stalk is formed by the delta and b chains.

It is found in the cell membrane. It catalyses the reaction ATP + H2O + 4 H(+)(in) = ADP + phosphate + 5 H(+)(out). In terms of biological role, produces ATP from ADP in the presence of a proton gradient across the membrane. The catalytic sites are hosted primarily by the beta subunits. The protein is ATP synthase subunit beta of Ureaplasma urealyticum serovar 10 (strain ATCC 33699 / Western).